The primary structure comprises 209 residues: Ribosome maturation factor RimM (209 aa).

Positions 103–178 constitute a PRC barrel domain; sequence EGATYVSDLV…RIEMVLPQGM (76 aa). The interval 184–209 is disordered; the sequence is PLSKAEKERQKSEADETREAGERRKR. A compositionally biased stretch (basic and acidic residues) spans 187–209; sequence KAEKERQKSEADETREAGERRKR.

Belongs to the RimM family. As to quaternary structure, binds ribosomal protein uS19.

Its subcellular location is the cytoplasm. An accessory protein needed during the final step in the assembly of 30S ribosomal subunit, possibly for assembly of the head region. Essential for efficient processing of 16S rRNA. May be needed both before and after RbfA during the maturation of 16S rRNA. It has affinity for free ribosomal 30S subunits but not for 70S ribosomes. The polypeptide is Ribosome maturation factor RimM (Koribacter versatilis (strain Ellin345)).